The chain runs to 441 residues: Eukaryotic translation initiation factor 3 subunit M (441 aa).

Residues E196–Y365 enclose the PCI domain. The segment covering K405–S418 has biased composition (basic and acidic residues). Residues K405 to E441 form a disordered region.

Belongs to the eIF-3 subunit M family. Component of the eukaryotic translation initiation factor 3 (eIF-3) complex.

The protein resides in the cytoplasm. Component of the eukaryotic translation initiation factor 3 (eIF-3) complex, which is involved in protein synthesis of a specialized repertoire of mRNAs and, together with other initiation factors, stimulates binding of mRNA and methionyl-tRNAi to the 40S ribosome. The eIF-3 complex specifically targets and initiates translation of a subset of mRNAs involved in cell proliferation. This is Eukaryotic translation initiation factor 3 subunit M from Phaeosphaeria nodorum (strain SN15 / ATCC MYA-4574 / FGSC 10173) (Glume blotch fungus).